Reading from the N-terminus, the 174-residue chain is ATP-dependent protease subunit HslV (174 aa).

Thr-2 is a catalytic residue. The Na(+) site is built by Gly-157, Cys-160, and Thr-163.

This sequence belongs to the peptidase T1B family. HslV subfamily. As to quaternary structure, a double ring-shaped homohexamer of HslV is capped on each side by a ring-shaped HslU homohexamer. The assembly of the HslU/HslV complex is dependent on binding of ATP.

It is found in the cytoplasm. The catalysed reaction is ATP-dependent cleavage of peptide bonds with broad specificity.. Allosterically activated by HslU binding. In terms of biological role, protease subunit of a proteasome-like degradation complex believed to be a general protein degrading machinery. This is ATP-dependent protease subunit HslV from Yersinia enterocolitica serotype O:8 / biotype 1B (strain NCTC 13174 / 8081).